The sequence spans 710 residues: Polyribonucleotide nucleotidyltransferase (710 aa).

Asp-489 and Asp-495 together coordinate Mg(2+). The region spanning 556-615 (PKIDTIKIDVDKIKVVIGKGGETIDKIIAETGVKIDIDDEGNVSIYSSDQAAIDRTKEII) is the KH domain. The S1 motif domain occupies 625 to 693 (GEVYHAKVVR…EKGRVDASMK (69 aa)). The disordered stretch occupies residues 691-710 (SMKALIPRPPKPEKKEEKHD). A compositionally biased stretch (basic and acidic residues) spans 700–710 (PKPEKKEEKHD).

The protein belongs to the polyribonucleotide nucleotidyltransferase family. Mg(2+) serves as cofactor.

The protein resides in the cytoplasm. It carries out the reaction RNA(n+1) + phosphate = RNA(n) + a ribonucleoside 5'-diphosphate. Functionally, involved in mRNA degradation. Catalyzes the phosphorolysis of single-stranded polyribonucleotides processively in the 3'- to 5'-direction. The polypeptide is Polyribonucleotide nucleotidyltransferase (Streptococcus pyogenes serotype M49 (strain NZ131)).